A 339-amino-acid polypeptide reads, in one-letter code: Deoxyhypusine hydroxylase (339 aa).

HEAT-like PBS-type repeat units follow at residues 71–97 (LKHE…VVKN) and 104–130 (CRHE…LRDD). Residues histidine 73, glutamate 74, histidine 106, and glutamate 107 each contribute to the Fe cation site. The segment at 159–183 (EKLKPSDFTSIDPAPPLPMASSQPS) is disordered. HEAT-like PBS-type repeat units lie at residues 200–233 (QRYR…GLKD), 238–264 (FRHE…TLSD), and 271–298 (VRHE…FLND). The Fe cation site is built by histidine 240, glutamate 241, histidine 273, and glutamate 274.

This sequence belongs to the deoxyhypusine hydroxylase family. Requires Fe(2+) as cofactor.

The protein resides in the cytoplasm. It localises to the nucleus. The catalysed reaction is [eIF5A protein]-deoxyhypusine + AH2 + O2 = [eIF5A protein]-hypusine + A + H2O. It participates in protein modification; eIF5A hypusination. Its function is as follows. Catalyzes the hydroxylation of the N(6)-(4-aminobutyl)-L-lysine intermediate to form hypusine, an essential post-translational modification only found in mature eIF-5A factor. This Aspergillus oryzae (strain ATCC 42149 / RIB 40) (Yellow koji mold) protein is Deoxyhypusine hydroxylase (lia1).